The sequence spans 158 residues: Secreted RxLR effector protein 2 (158 aa).

The first 21 residues, 1–21, serve as a signal peptide directing secretion; the sequence is MRLLLWVLLVTLVTFLSSGDA. The RxLR-dEER signature appears at 54–75; it reads RFLRGDRSNIVNLKDGDENEER.

The protein belongs to the RxLR effector family.

The protein resides in the secreted. It localises to the host cell. Its function is as follows. Secreted effector that completely suppresses elicitor-induced cell death in host and enhances virulence of P.parasitica. The polypeptide is Secreted RxLR effector protein 2 (Phytophthora nicotianae (Potato buckeye rot agent)).